The chain runs to 315 residues: Homeobox-leucine zipper protein HAT3 (315 aa).

The segment at Ser-140–Lys-163 is disordered. Residues Ser-159–Gln-218 constitute a DNA-binding region (homeobox). The leucine-zipper stretch occupies residues Leu-226 to Leu-247. Positions Ser-280–Pro-305 are enriched in low complexity. A disordered region spans residues Ser-280–His-315.

This sequence belongs to the HD-ZIP homeobox family. Class II subfamily.

The protein localises to the nucleus. Functionally, probable transcription factor. This chain is Homeobox-leucine zipper protein HAT3 (HAT3), found in Arabidopsis thaliana (Mouse-ear cress).